The chain runs to 324 residues: 26S proteasome non-ATPase regulatory subunit 7 (324 aa).

In terms of domain architecture, MPN spans 9–144 (VVVHPLVLLS…TEAYISVEEV (136 aa)). Residue K180 forms a Glycyl lysine isopeptide (Lys-Gly) (interchain with G-Cter in ubiquitin) linkage. Residues K204, K214, K316, and K317 each carry the N6-acetyllysine modification. Residues 281–324 (ANRDAEKKEGQEKEESKKDRKEDKEKDKDKEKSDVKKEEKKEKK) are disordered.

Belongs to the peptidase M67A family. As to quaternary structure, component of the 19S proteasome regulatory particle complex. The 26S proteasome consists of a 20S core particle (CP) and two 19S regulatory subunits (RP). The regulatory particle is made of a lid composed of 9 subunits including PSMD7, a base containing 6 ATPases and few additional components. Within the complex, PSMD7 interacts with subunit PSMD4 through their respective MPN domain. Interacts with TRIM5.

Functionally, component of the 26S proteasome, a multiprotein complex involved in the ATP-dependent degradation of ubiquitinated proteins. This complex plays a key role in the maintenance of protein homeostasis by removing misfolded or damaged proteins, which could impair cellular functions, and by removing proteins whose functions are no longer required. Therefore, the proteasome participates in numerous cellular processes, including cell cycle progression, apoptosis, or DNA damage repair. This Homo sapiens (Human) protein is 26S proteasome non-ATPase regulatory subunit 7 (PSMD7).